Reading from the N-terminus, the 316-residue chain is Phospho-N-acetylmuramoyl-pentapeptide-transferase (316 aa).

The next 10 membrane-spanning stretches (helical) occupy residues 5 to 25, 52 to 72, 76 to 96, 116 to 136, 145 to 165, 172 to 192, 195 to 212, 221 to 241, 244 to 264, and 296 to 316; these read IIFATLLSFTVAIISGRFFIP, TMGGIIFVVATFLTSLIFSPW, LFILLAGFLGYGLIGFADDFL, FLLAIVISWFIKSNVGTEIIV, LANFYIPFAVFIIVGTVNSVN, GLAAGVSTIVMAFFAMIALFL, VTYGVFSASLTGGLLGFL, VFMGDTGSLAIGGAVATVALL, LPLILPVLGIIYVAEAISVIL, and VVYSFWLVTLIALFVSFYSLS.

Belongs to the glycosyltransferase 4 family. MraY subfamily. The cofactor is Mg(2+).

Its subcellular location is the cell membrane. It catalyses the reaction UDP-N-acetyl-alpha-D-muramoyl-L-alanyl-gamma-D-glutamyl-meso-2,6-diaminopimeloyl-D-alanyl-D-alanine + di-trans,octa-cis-undecaprenyl phosphate = di-trans,octa-cis-undecaprenyl diphospho-N-acetyl-alpha-D-muramoyl-L-alanyl-D-glutamyl-meso-2,6-diaminopimeloyl-D-alanyl-D-alanine + UMP. It functions in the pathway cell wall biogenesis; peptidoglycan biosynthesis. In terms of biological role, catalyzes the initial step of the lipid cycle reactions in the biosynthesis of the cell wall peptidoglycan: transfers peptidoglycan precursor phospho-MurNAc-pentapeptide from UDP-MurNAc-pentapeptide onto the lipid carrier undecaprenyl phosphate, yielding undecaprenyl-pyrophosphoryl-MurNAc-pentapeptide, known as lipid I. The polypeptide is Phospho-N-acetylmuramoyl-pentapeptide-transferase (Caldanaerobacter subterraneus subsp. tengcongensis (strain DSM 15242 / JCM 11007 / NBRC 100824 / MB4) (Thermoanaerobacter tengcongensis)).